A 393-amino-acid polypeptide reads, in one-letter code: MEGRGPLATSPRRRWLLLLLLLPHSHQRIQDPPAVHLSSASGQGPVTIMTFDFTKMRKTSSSFELRTWDPEGVILYGDTDPHEDWFMLGLRGGRPEIQIHNHVARLTVGAGPRLDDGKWHQVEVKVLGDLLLLTVDGEEVLCLKQVFGPLASRPQPVVRIAVGGLPFPPSSLRLPLVPALDGCVRRGSWLDHQAQTSVSALSGSPRSCGVESQPGSFFPPGAHAEFSLQDLPQPHAEPWAFSLDLGLQLAAGSGHLLALGTPENPPRLSLQLQDQKVVLSSAWGPQLHLPLVLGAPLQLKLAASGVTLSQGPETEILALPLSDPGSLLNLWVQPHARLFLGALPGEAASASFCLDGLWAQGQKLDMDRALNRSQNIWTHSCPQSLGNDTDTTH.

Positions 1–27 are cleaved as a signal peptide; the sequence is MEGRGPLATSPRRRWLLLLLLLPHSHQ. Laminin G-like domains follow at residues 35-208 and 215-381; these read VHLS…PRSC and GSFF…THSC. 2 disulfide bridges follow: C183-C208 and C353-C381. N371 and N387 each carry an N-linked (GlcNAc...) asparagine glycan.

In terms of assembly, homodimer.

It localises to the secreted. Functions as an androgen transport protein, but may also be involved in receptor mediated processes. Each dimer binds one molecule of steroid. Specific for 5-alpha-dihydrotestosterone, testosterone, and 17-beta-estradiol. Regulates the plasma metabolic clearance rate of steroid hormones by controlling their plasma concentration. This chain is Sex hormone-binding globulin (SHBG), found in Crocuta crocuta (Spotted hyena).